We begin with the raw amino-acid sequence, 1894 residues long: Plexin-A4 (1894 aa).

The N-terminal stretch at 1–23 is a signal peptide; sequence MKAMPWNWTCLLSHLLMVGMGSS. The Sema domain maps to 24 to 507; it reads TLLTRQPAPL…SERQLTRVPV (484 aa). Residues 24 to 1237 lie on the Extracellular side of the membrane; that stretch reads TLLTRQPAPL…IAPDSPLSLP (1214 aa). 10 disulfides stabilise this stretch: Cys-95–Cys-104, Cys-130–Cys-138, Cys-284–Cys-405, Cys-300–Cys-356, Cys-374–Cys-393, Cys-510–Cys-527, Cys-516–Cys-558, Cys-519–Cys-536, Cys-530–Cys-542, and Cys-593–Cys-612. The PSI 1 domain maps to 509–559; it reads SCGQYQSCGECLGSGDPHCGWCVLHNTCTRKERCERSKEPRRFASEMKQCV. Asn-655 is a glycosylation site (N-linked (GlcNAc...) asparagine). 2 PSI domains span residues 655 to 702 and 803 to 856; these read NCSV…EDCP and KCGA…SKCT. IPT/TIG domains lie at 858 to 952, 954 to 1037, 1040 to 1139, and 1142 to 1230; these read PRIT…YYFM, LTLS…FQYV, PTIV…FTYY, and PVFE…YIAP. Residues Asn-1007, Asn-1132, and Asn-1180 are each glycosylated (N-linked (GlcNAc...) asparagine). The chain crosses the membrane as a helical span at residues 1238 to 1258; the sequence is AIVSIAVAGGLLIIFIVAVLI. Topologically, residues 1259-1894 are cytoplasmic; the sequence is AYKRKSRESD…QVITLMSLDS (636 aa). Lys-1350 bears the N6-acetyllysine mark.

This sequence belongs to the plexin family. Interacts with NRP1 and NRP2.

The protein localises to the cell membrane. Coreceptor for SEMA3A. Necessary for signaling by class 3 semaphorins and subsequent remodeling of the cytoskeleton. Plays a role in axon guidance in the developing nervous system. Class 3 semaphorins bind to a complex composed of a neuropilin and a plexin. The plexin modulates the affinity of the complex for specific semaphorins, and its cytoplasmic domain is required for the activation of down-stream signaling events in the cytoplasm. The protein is Plexin-A4 (PLXNA4) of Homo sapiens (Human).